Reading from the N-terminus, the 418-residue chain is Glutamyl-tRNA(Gln) amidotransferase subunit D (418 aa).

In terms of domain architecture, Asparaginase/glutaminase spans 74–405 (KNISILSTGG…EESKELMSKN (332 aa)). Residues Thr-84, Thr-160, Asp-161, and Lys-237 contribute to the active site.

It belongs to the asparaginase 1 family. GatD subfamily. As to quaternary structure, heterodimer of GatD and GatE.

The enzyme catalyses L-glutamyl-tRNA(Gln) + L-glutamine + ATP + H2O = L-glutaminyl-tRNA(Gln) + L-glutamate + ADP + phosphate + H(+). Allows the formation of correctly charged Gln-tRNA(Gln) through the transamidation of misacylated Glu-tRNA(Gln) in organisms which lack glutaminyl-tRNA synthetase. The reaction takes place in the presence of glutamine and ATP through an activated gamma-phospho-Glu-tRNA(Gln). The GatDE system is specific for glutamate and does not act on aspartate. The protein is Glutamyl-tRNA(Gln) amidotransferase subunit D of Methanococcus maripaludis (strain C5 / ATCC BAA-1333).